A 528-amino-acid polypeptide reads, in one-letter code: Tyrosine--tRNA ligase, cytoplasmic (528 aa).

The residue at position 1 (Met-1) is an N-acetylmethionine. Residue Gly-2 is modified to N-acetylglycine; in Tyrosine--tRNA ligase, cytoplasmic, N-terminally processed. L-tyrosine is bound at residue Tyr-39. Position 39 (Tyr-39) interacts with trans-resveratrol. Positions 44 to 52 (TTGKPHVAY) match the 'HIGH' region motif. Residues Tyr-166, Gln-170, Asp-173, and Gln-188 each coordinate L-tyrosine. Trans-resveratrol-binding residues include Gln-170 and Asp-173. N6-acetyllysine is present on Lys-197. The residue at position 205 (Ser-205) is a Phosphoserine. Lys-206 is subject to N6-acetyllysine. The 'KMSKS' region signature appears at 222–226 (KMSSS). The Nuclear localization signal signature appears at 242–247 (KKKLKK). Residues 339–363 (AAYPDPSKQKPPAKGPAKNSEPEEV) form a disordered region. The tRNA-binding domain maps to 364–468 (IPSRLDIRVG…AGSAPGERVF (105 aa)). Ser-386 carries the phosphoserine modification. An N6-acetyllysine mark is found at Lys-474, Lys-482, and Lys-490.

It belongs to the class-I aminoacyl-tRNA synthetase family. In terms of assembly, homodimer. Interacts (when binding to resveratrol) with PARP1; interaction stimulates the poly-ADP-ribosyltransferase activity of PARP1.

Its subcellular location is the cytoplasm. The protein localises to the nucleus. The enzyme catalyses tRNA(Tyr) + L-tyrosine + ATP = L-tyrosyl-tRNA(Tyr) + AMP + diphosphate + H(+). Its activity is regulated as follows. Resveratrol strongly inhibits the tyrosine--tRNA ligase activity. Its function is as follows. Tyrosine--tRNA ligase that catalyzes the attachment of tyrosine to tRNA(Tyr) in a two-step reaction: tyrosine is first activated by ATP to form Tyr-AMP and then transferred to the acceptor end of tRNA(Tyr). Also acts as a positive regulator of poly-ADP-ribosylation in the nucleus, independently of its tyrosine--tRNA ligase activity. Activity is switched upon resveratrol-binding: resveratrol strongly inhibits the tyrosine--tRNA ligase activity and promotes relocalization to the nucleus, where YARS1 specifically stimulates the poly-ADP-ribosyltransferase activity of PARP1. The polypeptide is Tyrosine--tRNA ligase, cytoplasmic (Yars1) (Mus musculus (Mouse)).